Consider the following 313-residue polypeptide: Secretory carrier-associated membrane protein 4 (313 aa).

The interval 1–69 (MAGRSRYDNP…LPPEPADFYN (69 aa)) is disordered. Residues 1–148 (MAGRSRYDNP…EIPVHLQRTQ (148 aa)) are Cytoplasmic-facing. The stretch at 85-116 (MKTREKELLAKEAELNRREKEIKRREEAAARA) forms a coiled coil. 4 helical membrane passes run 149 to 169 (YVAF…IICV), 181 to 201 (IWFL…YLWY), 216 to 236 (FGWF…AAVS), and 255 to 275 (LIGN…MFCL). Residues 276–313 (ESLLSMWVIQRVYLYFRGSGKEAEMKREAARSAARAAF) lie on the Cytoplasmic side of the membrane.

It belongs to the SCAMP family.

It is found in the cell membrane. The protein localises to the cytoplasmic vesicle. It localises to the secretory vesicle membrane. Functionally, probably involved in membrane trafficking. The chain is Secretory carrier-associated membrane protein 4 (SCAMP4) from Oryza sativa subsp. japonica (Rice).